The primary structure comprises 1073 residues: DNA-directed RNA polymerase subunit beta (1073 aa).

This sequence belongs to the RNA polymerase beta chain family. As to quaternary structure, in plastids the minimal PEP RNA polymerase catalytic core is composed of four subunits: alpha, beta, beta', and beta''. When a (nuclear-encoded) sigma factor is associated with the core the holoenzyme is formed, which can initiate transcription.

It is found in the plastid. Its subcellular location is the chloroplast. The enzyme catalyses RNA(n) + a ribonucleoside 5'-triphosphate = RNA(n+1) + diphosphate. Its function is as follows. DNA-dependent RNA polymerase catalyzes the transcription of DNA into RNA using the four ribonucleoside triphosphates as substrates. The sequence is that of DNA-directed RNA polymerase subunit beta from Aethionema grandiflorum (Persian stone-cress).